The sequence spans 126 residues: Fluoride-specific ion channel FluC 2 (126 aa).

A run of 4 helical transmembrane segments spans residues 11–31, 34–54, 66–86, and 93–113; these read IFLI…LCEL, GQLG…MIMY, GKIA…TFAV, and FIPA…GVFF. Positions 76 and 79 each coordinate Na(+).

It belongs to the fluoride channel Fluc/FEX (TC 1.A.43) family.

It localises to the cell membrane. It catalyses the reaction fluoride(in) = fluoride(out). Its activity is regulated as follows. Na(+) is not transported, but it plays an essential structural role and its presence is essential for fluoride channel function. Functionally, fluoride-specific ion channel. Important for reducing fluoride concentration in the cell, thus reducing its toxicity. The sequence is that of Fluoride-specific ion channel FluC 2 from Methanosarcina acetivorans (strain ATCC 35395 / DSM 2834 / JCM 12185 / C2A).